Reading from the N-terminus, the 147-residue chain is Large ribosomal subunit protein uL22c (147 aa).

The protein belongs to the universal ribosomal protein uL22 family. As to quaternary structure, part of the 50S ribosomal subunit.

It localises to the plastid. In terms of biological role, this protein binds specifically to 23S rRNA. Its function is as follows. The globular domain of the protein is located near the polypeptide exit tunnel on the outside of the subunit, while an extended beta-hairpin is found that lines the wall of the exit tunnel in the center of the 70S ribosome. In Cuscuta gronovii (Common dodder), this protein is Large ribosomal subunit protein uL22c (rpl22).